Consider the following 1148-residue polypeptide: Maintenance of telomere capping protein 5 (1148 aa).

WD repeat units follow at residues 63 to 106, 112 to 152, 156 to 195, 199 to 239, and 299 to 348; these read HHIT…SNAI, GHSR…RPFY, SWRSAASQVKWNYKDPNVLASSHGNDIFVWDLRKGSTPLC, GHVS…TESK, and GHSD…YGKV. Positions 432-543 constitute an RWD domain; that stretch reads EEVSAIGHKF…RFVLGEKVSL (112 aa). S759 bears the Phosphoserine mark. The interval 963-990 is disordered; it reads THNTLNGSSKFTEPAQKQGSRAISSSPF. Residues 964 to 990 show a composition bias toward polar residues; sequence HNTLNGSSKFTEPAQKQGSRAISSSPF.

It belongs to the WD repeat WDR59 family. In terms of assembly, component of the SEA complex composed of at least IML1/SEA1, RTC1/SEA2, MTC5/SEA3, NPR2, NPR3, SEA4, SEC13 and SEH1.

Its subcellular location is the vacuole membrane. Functionally, component of the SEA complex which coats the vacuolar membrane and is involved in intracellular trafficking, autophagy, response to nitrogen starvation, and amino acid biogenesis. May be involved in telomere capping. The protein is Maintenance of telomere capping protein 5 (MTC5) of Saccharomyces cerevisiae (strain ATCC 204508 / S288c) (Baker's yeast).